The following is a 429-amino-acid chain: Ribonuclease E/G-like protein (429 aa).

Asp290 and Asp332 together coordinate Mg(2+).

This sequence belongs to the RNase E/G family. Mg(2+) serves as cofactor.

It localises to the plastid. It is found in the chloroplast stroma. Involved in intercistronic processing of primary transcripts from chloroplast operons. The endonucleolytic activity of the enzyme depends on the number of phosphates at the 5' end, is inhibited by structured RNA, and preferentially cleaves A/U-rich sequences. In Guillardia theta (Cryptophyte), this protein is Ribonuclease E/G-like protein (rne).